The chain runs to 455 residues: Bifunctional protein GlmU (455 aa).

A pyrophosphorylase region spans residues 1 to 225 (MNIVILAAGL…EWETLGVNSK (225 aa)). UDP-N-acetyl-alpha-D-glucosamine-binding positions include 6–9 (LAAG), Lys-20, Gln-71, 76–77 (GT), 98–100 (YGD), Gly-135, Glu-150, Asn-165, and Asn-223. Asp-100 contributes to the Mg(2+) binding site. Position 223 (Asn-223) interacts with Mg(2+). Residues 226-246 (VQLAELERIHQRNLAQQLLED) form a linker region. Residues 247-455 (GVTLIDPARI…QRPVKQKKDA (209 aa)) are N-acetyltransferase. Positions 329 and 347 each coordinate UDP-N-acetyl-alpha-D-glucosamine. The active-site Proton acceptor is His-359. The UDP-N-acetyl-alpha-D-glucosamine site is built by Tyr-362 and Asn-373. Residues Ala-376, 382-383 (NY), Ser-401, Ala-419, and Arg-436 each bind acetyl-CoA.

This sequence in the N-terminal section; belongs to the N-acetylglucosamine-1-phosphate uridyltransferase family. In the C-terminal section; belongs to the transferase hexapeptide repeat family. As to quaternary structure, homotrimer. The cofactor is Mg(2+).

It is found in the cytoplasm. The catalysed reaction is alpha-D-glucosamine 1-phosphate + acetyl-CoA = N-acetyl-alpha-D-glucosamine 1-phosphate + CoA + H(+). It carries out the reaction N-acetyl-alpha-D-glucosamine 1-phosphate + UTP + H(+) = UDP-N-acetyl-alpha-D-glucosamine + diphosphate. It participates in nucleotide-sugar biosynthesis; UDP-N-acetyl-alpha-D-glucosamine biosynthesis; N-acetyl-alpha-D-glucosamine 1-phosphate from alpha-D-glucosamine 6-phosphate (route II): step 2/2. The protein operates within nucleotide-sugar biosynthesis; UDP-N-acetyl-alpha-D-glucosamine biosynthesis; UDP-N-acetyl-alpha-D-glucosamine from N-acetyl-alpha-D-glucosamine 1-phosphate: step 1/1. It functions in the pathway bacterial outer membrane biogenesis; LPS lipid A biosynthesis. Its function is as follows. Catalyzes the last two sequential reactions in the de novo biosynthetic pathway for UDP-N-acetylglucosamine (UDP-GlcNAc). The C-terminal domain catalyzes the transfer of acetyl group from acetyl coenzyme A to glucosamine-1-phosphate (GlcN-1-P) to produce N-acetylglucosamine-1-phosphate (GlcNAc-1-P), which is converted into UDP-GlcNAc by the transfer of uridine 5-monophosphate (from uridine 5-triphosphate), a reaction catalyzed by the N-terminal domain. In Ralstonia nicotianae (strain ATCC BAA-1114 / GMI1000) (Ralstonia solanacearum), this protein is Bifunctional protein GlmU.